We begin with the raw amino-acid sequence, 130 residues long: IHQEPIYPYILVEHGADISANYDRTIINSSEYGNFEIVKYLIDNGADITAINEYGFTPLDLSSKNGHYEIVKLLVECRASIIKTDNLTLILASENGHIKIVKLLVENGADIRYHNNYSLQLALKEAIVKS.

ANK repeat units follow at residues 21 to 50 (NYDR…DITA), 54 to 83 (YGFT…SIIK), and 85 to 113 (DNLT…DIRY).

This chain is Putative ankyrin repeat protein R886, found in Acanthamoeba polyphaga (Amoeba).